The chain runs to 567 residues: MSNISRQAYADMFGPTTGDKIRLADTELWIEVEDDLTTYGEEVKFGGGKVIRDGMGQGQMLSAGCADLVLTNALIIDYWGIVKADIGVKDGRIFAIGKAGNPDIQPNVTIPIGVSTEIIAAEGRIVTAGGVDTHIHWICPQQAEEALTSGITTMIGGGTGPTAGSNATTCTPGPWYIYQMLQAADSLPVNIGLLGKGNCSNPDALREQVAAGVIGLKIHEDWGATPAVINCALTVADEMDVQVALHSDTLNESGFVEDTLTAIGGRTIHTFHTEGAGGGHAPDIITACAHPNILPSSTNPTLPYTVNTIDEHLDMLMVCHHLDPDIAEDVAFAESRIRQETIAAEDVLHDLGAFSLTSSDSQAMGRVGEVVLRTWQVAHRMKVQRGPLPEESGDNDNVRVKRYIAKYTINPALTHGIAHEVGSIEVGKLADLVLWSPAFFGVKPATIVKGGMIAMAPMGDINGSIPTPQPVHYRPMFAALGSARHRCRVTFLSQAAAANGVAEQLNLHSTTAVVKGCRTVQKADMRHNSLLPDITVDSQTYEVRINGELITSEPADILPMAQRYFLF.

Residues 129 to 567 enclose the Urease domain; that stretch reads GGVDTHIHWI…LPMAQRYFLF (439 aa). Ni(2+) contacts are provided by His134, His136, and Lys217. The residue at position 217 (Lys217) is an N6-carboxylysine. His219 serves as a coordination point for substrate. His246 and His272 together coordinate Ni(2+). Catalysis depends on His320, which acts as the Proton donor. Asp360 serves as a coordination point for Ni(2+).

This sequence belongs to the metallo-dependent hydrolases superfamily. Urease alpha subunit family. As to quaternary structure, heterotrimer of UreA (gamma), UreB (beta) and UreC (alpha) subunits. Three heterotrimers associate to form the active enzyme. Ni cation is required as a cofactor. In terms of processing, carboxylation allows a single lysine to coordinate two nickel ions.

The protein resides in the cytoplasm. It catalyses the reaction urea + 2 H2O + H(+) = hydrogencarbonate + 2 NH4(+). Its pathway is nitrogen metabolism; urea degradation; CO(2) and NH(3) from urea (urease route): step 1/1. This chain is Urease subunit alpha, found in Escherichia coli O157:H7.